Reading from the N-terminus, the 280-residue chain is Type 1 encapsulin shell protein (280 aa).

This sequence belongs to the encapsulin family. Family 1 subfamily. This encapsulin nanocompartment is formed by 60 subunits; monomers form pentamers which assemble to form shells. There are 12 pores where the pentamers meet as well as 3-fold axis channels and dimer channels; none are larger than 3-4 Angstroms in diameter. The N-terminus of the protein is inside the shell, the C-terminus is outside.

It localises to the encapsulin nanocompartment. In terms of biological role, shell component of a type 1 encapsulin nanocompartment. Assembles into proteinaceous icosahedral shells 24 nm in diameter in the presence and absence of its ferritin cargo protein. The center of cargo-loaded nanocompartments is loaded with iron. The empty encapsulin nanocompartment sequesters about 2200 Fe ions while the cargo-loaded nanocompartment can maximally sequester about 4150 Fe ions. Does not have any detectable ferroxidase activity. In Rhodospirillum rubrum (strain ATCC 11170 / ATH 1.1.1 / DSM 467 / LMG 4362 / NCIMB 8255 / S1), this protein is Type 1 encapsulin shell protein.